The sequence spans 423 residues: Large ribosomal subunit protein mL37 (423 aa).

A mitochondrion-targeting transit peptide spans methionine 1–glycine 29.

This sequence belongs to the mitochondrion-specific ribosomal protein mL37 family. As to quaternary structure, component of the mitochondrial ribosome large subunit (39S) which comprises a 16S rRNA and about 50 distinct proteins.

The protein localises to the mitochondrion. The sequence is that of Large ribosomal subunit protein mL37 (Mrpl37) from Mus musculus (Mouse).